Consider the following 400-residue polypeptide: Serine/threonine transporter SstT (400 aa).

A run of 9 helical transmembrane segments spans residues 9–29 (LVTQ…VWPA), 36–56 (ILGS…VFVL), 75–95 (VLVL…VASM), 134–154 (ALLE…GLAL), 175–195 (VIQL…ASTF), 209–229 (LLAV…PLIV), 281–301 (IAIP…ISVL), 323–343 (VVAS…LLLI), and 349–369 (LFGI…IIGI).

It belongs to the dicarboxylate/amino acid:cation symporter (DAACS) (TC 2.A.23) family.

The protein localises to the cell inner membrane. It carries out the reaction L-serine(in) + Na(+)(in) = L-serine(out) + Na(+)(out). The catalysed reaction is L-threonine(in) + Na(+)(in) = L-threonine(out) + Na(+)(out). Functionally, involved in the import of serine and threonine into the cell, with the concomitant import of sodium (symport system). The chain is Serine/threonine transporter SstT from Acidovorax sp. (strain JS42).